Here is a 319-residue protein sequence, read N- to C-terminus: Probable NAD(P)H-dependent D-xylose reductase xyl1 (319 aa).

Y50 functions as the Proton donor in the catalytic mechanism. H112 lines the substrate pocket. Residues 166–167 (SN), 215–224 (SSFGPLSFLE), and 271–281 (KSNNPARLLQN) contribute to the NAD(+) site.

The protein belongs to the aldo/keto reductase family.

The enzyme catalyses xylitol + NAD(+) = D-xylose + NADH + H(+). The catalysed reaction is xylitol + NADP(+) = D-xylose + NADPH + H(+). It participates in carbohydrate metabolism; D-xylose degradation. Its function is as follows. Catalyzes the initial reaction in the xylose utilization pathway by reducing D-xylose into xylitol. Xylose is a major component of hemicelluloses such as xylan. Most fungi utilize D-xylose via three enzymatic reactions, xylose reductase (XR), xylitol dehydrogenase (XDH), and xylulokinase, to form xylulose 5-phosphate, which enters pentose phosphate pathway. The chain is Probable NAD(P)H-dependent D-xylose reductase xyl1 (xyl1) from Emericella nidulans (strain FGSC A4 / ATCC 38163 / CBS 112.46 / NRRL 194 / M139) (Aspergillus nidulans).